Consider the following 1051-residue polypeptide: Ubiquitin carboxyl-terminal hydrolase 28 (1051 aa).

The segment at D60–A82 is disordered. S67 is subject to Phosphoserine. One can recognise a UIM domain in the interval D97 to I116. A Glycyl lysine isopeptide (Lys-Gly) (interchain with G-Cter in SUMO2) cross-link involves residue K99. Over residues R121–K135 the composition is skewed to basic and acidic residues. The tract at residues R121–K140 is disordered. The 494-residue stretch at V162–D655 folds into the USP domain. Residue C171 is the Nucleophile of the active site. S376 carries the phosphoserine modification. The interval D483–V538 is disordered. Composition is skewed to polar residues over residues K487–S505 and P519–E528. Residue S555 is modified to Phosphoserine. H605 serves as the catalytic Proton acceptor. The tract at residues E703–H735 is disordered. The span at E713–P730 shows a compositional bias: low complexity. A Phosphoserine modification is found at S720. Position 1022 is a phosphothreonine (T1022).

This sequence belongs to the peptidase C19 family. USP28 subfamily. In terms of assembly, interacts with ZNF304. Interacts with PRKD1. Interacts with TP53BP1. Interacts with FBXW7; following DNA damage, dissociates from FBXW7 leading to degradation of MYC. In terms of processing, degraded upon nickel ion level or hypoxia exposure. Phosphorylated upon DNA damage at Ser-67 and Ser-720, by ATM or ATR. Phosphorylated by PRKD1.

The protein localises to the nucleus. It is found in the nucleoplasm. The catalysed reaction is Thiol-dependent hydrolysis of ester, thioester, amide, peptide and isopeptide bonds formed by the C-terminal Gly of ubiquitin (a 76-residue protein attached to proteins as an intracellular targeting signal).. Deubiquitinase involved in DNA damage response checkpoint and MYC proto-oncogene stability. Involved in DNA damage induced apoptosis by specifically deubiquitinating proteins of the DNA damage pathway such as CLSPN. Also involved in G2 DNA damage checkpoint, by deubiquitinating CLSPN, and preventing its degradation by the anaphase promoting complex/cyclosome (APC/C). In contrast, it does not deubiquitinate PLK1. Specifically deubiquitinates MYC in the nucleoplasm, leading to prevent MYC degradation by the proteasome: acts by specifically interacting with FBXW7 (FBW7alpha) in the nucleoplasm and counteracting ubiquitination of MYC by the SCF(FBXW7) complex. Deubiquitinates ZNF304, hence preventing ZNF304 degradation by the proteasome and leading to the activated KRAS-mediated promoter hypermethylation and transcriptional silencing of tumor suppressor genes (TSGs) in a subset of colorectal cancers (CRC) cells. The sequence is that of Ubiquitin carboxyl-terminal hydrolase 28 (Usp28) from Mus musculus (Mouse).